Consider the following 616-residue polypeptide: Chaperone protein HscA (616 aa).

Belongs to the heat shock protein 70 family.

Functionally, chaperone involved in the maturation of iron-sulfur cluster-containing proteins. Has a low intrinsic ATPase activity which is markedly stimulated by HscB. Involved in the maturation of IscU. The polypeptide is Chaperone protein HscA (Escherichia coli O139:H28 (strain E24377A / ETEC)).